The sequence spans 407 residues: MMIDGLPTLDDIPYRGKHVLLRVDINAPIVNSTILDTSRFESHIPTIEALEDSKLVLLAHQSRPGKKDFTSLESHASTLSKLLGKRVEYIDEIFSKGVLRRIKEMENGEVILLENVRFYSEEQLNRSAEEHAECHMVRKLSTAFDLFVNDAFSASHRSHASLVGFVPVLPSVVGRLVENEVTALSKPLKGEGRKIFVLGGAKIKDSVKVLKNVLENNIAEKVVLTGVVANYFLMLKGYDIGEVNRKVVEDNKEDVSDEEMINILKKYSDKIILPIDLGIEKDGVRVDIPLEKFDGKYRIMDIGLETVNQLSEIIPKYDYVVLNGPAGVFEDERFSLGTYEILRAATRAGYSVVGGGHIASAARLFGLSDKFSHISTAGGACIRFLSGEKLVALEVIKEYWAKKWGKS.

Substrate is bound by residues 24–26, arginine 39, 60–63, arginine 117, and arginine 157; these read DIN and HQSR. Residues glutamate 330 and 355–358 each bind ATP; that span reads GGHI.

The protein belongs to the phosphoglycerate kinase family.

It is found in the cytoplasm. The catalysed reaction is (2R)-3-phosphoglycerate + ATP = (2R)-3-phospho-glyceroyl phosphate + ADP. Its pathway is carbohydrate degradation; glycolysis; pyruvate from D-glyceraldehyde 3-phosphate: step 2/5. The sequence is that of Phosphoglycerate kinase (pgk) from Archaeoglobus fulgidus (strain ATCC 49558 / DSM 4304 / JCM 9628 / NBRC 100126 / VC-16).